Here is a 591-residue protein sequence, read N- to C-terminus: Probable auxin efflux carrier component 3b (591 aa).

Residues 1 to 6 (MISWHE) lie on the Extracellular side of the membrane. Residues 7–27 (LYMVLSAVVPLYVAMMVAYGS) form a helical membrane-spanning segment. Residues 28 to 38 (VRWWGVLTPEQ) are Cytoplasmic-facing. A helical transmembrane segment spans residues 39-59 (CSGINRFVAVIAVPLLSFHFI). Valine 51 serves as a coordination point for (indol-3-yl)acetate. At 60–70 (SSSDPYAMNLR) the chain is on the extracellular side. Residues 71-93 (FVAADTLQKVLVLAALAAWSRFP) traverse the membrane as a helical segment. Residues 94 to 107 (ARFVPPAWPPLDCS) are Cytoplasmic-facing. A helical membrane pass occupies residues 108–128 (ITLFSVSTLPNTLVMGIPLLV). Residues asparagine 118 and leucine 120 each contribute to the (indol-3-yl)acetate site. Residues 129–137 (SMYGPYSGD) are Extracellular-facing. The chain crosses the membrane as a helical span at residues 138 to 158 (LMVQIVVLQSIVWYTLLLFLF). Tyrosine 151 contributes to the (indol-3-yl)acetate binding site. At 159 to 450 (EFRAARVLIA…LIRNPNTYAS (292 aa)) the chain is on the cytoplasmic side. 2 stretches are compositionally biased toward polar residues: residues 243–254 (SRNATPRGSTFT) and 283–292 (SSSRQHTPRP). 4 disordered regions span residues 243-269 (SRNA…SALR), 283-313 (SSSR…APTN), 344-374 (ETRR…GERA), and 392-420 (AGAK…RARG). Low complexity predominate over residues 395–407 (KTEQQTTAVTTTT). Residues 451–471 (LIGLTWSLIAFRFHITMPIIV) form a helical membrane-spanning segment. The Extracellular portion of the chain corresponds to 472-474 (AKS). A helical transmembrane segment spans residues 475-495 (ISILSDAGLGMAMFSLGLFMA). Residues 496–511 (TQPKIIACGYSVAAAS) are Cytoplasmic-facing. Residues 512–532 (MGVRFFFGPAIMAAASAAVGI) form a helical membrane-spanning segment. Over 533 to 535 (RGT) the chain is Extracellular. A helical transmembrane segment spans residues 536–556 (LLRIAIVQAALPQGIVPFVFA). 2 residues coordinate (indol-3-yl)acetate: isoleucine 550 and valine 551. At 557 to 568 (KEYNLHATILCT) the chain is on the cytoplasmic side. Residues 569-589 (LVIFGMLIALPITLVYYIILG) traverse the membrane as a helical segment. The Extracellular segment spans residues 590 to 591 (LL).

It belongs to the auxin efflux carrier (TC 2.A.69.1) family. As to quaternary structure, homodimer. As to expression, expressed in stem bases and leaves.

The protein resides in the membrane. In terms of biological role, may act as a component of the auxin efflux carrier. This is Probable auxin efflux carrier component 3b from Oryza sativa subsp. japonica (Rice).